We begin with the raw amino-acid sequence, 421 residues long: Histidine--tRNA ligase (421 aa).

Belongs to the class-II aminoacyl-tRNA synthetase family. As to quaternary structure, homodimer.

The protein localises to the cytoplasm. It carries out the reaction tRNA(His) + L-histidine + ATP = L-histidyl-tRNA(His) + AMP + diphosphate + H(+). In Francisella tularensis subsp. holarctica (strain FTNF002-00 / FTA), this protein is Histidine--tRNA ligase.